A 318-amino-acid polypeptide reads, in one-letter code: Cephalosporin-C deacetylase (318 aa).

A substrate-binding site is contributed by tyrosine 91. Serine 181 acts as the Nucleophile in catalysis. Catalysis depends on charge relay system residues aspartate 269 and histidine 298.

It belongs to the carbohydrate esterase 7 family. As to quaternary structure, homohexamer.

It localises to the cytoplasm. It carries out the reaction Deacetylation of xylans and xylo-oligosaccharides.. The enzyme catalyses cephalosporin C + H2O = deacetylcephalosporin C + acetate + H(+). Esterase that removed acetyl groups from a number of O-acetylated small substrates, such as acetylated xylose, short xylooligosaccharides and cephalosporin C. Has no activity towards polymeric acetylated xylan. Cannot cleave amide linkages. The sequence is that of Cephalosporin-C deacetylase (cah) from Bacillus subtilis (strain 168).